The following is a 165-amino-acid chain: NADH-quinone oxidoreductase subunit I (165 aa).

2 4Fe-4S ferredoxin-type domains span residues 66–98 (HRLT…ITAT) and 109–138 (SKFT…MDTG). Cys-78, Cys-81, Cys-84, Cys-88, Cys-118, Cys-121, Cys-124, and Cys-128 together coordinate [4Fe-4S] cluster.

Belongs to the complex I 23 kDa subunit family. NDH-1 is composed of 14 different subunits. Subunits NuoA, H, J, K, L, M, N constitute the membrane sector of the complex. [4Fe-4S] cluster is required as a cofactor.

It localises to the cell inner membrane. The enzyme catalyses a quinone + NADH + 5 H(+)(in) = a quinol + NAD(+) + 4 H(+)(out). NDH-1 shuttles electrons from NADH, via FMN and iron-sulfur (Fe-S) centers, to quinones in the respiratory chain. The immediate electron acceptor for the enzyme in this species is believed to be ubiquinone. Couples the redox reaction to proton translocation (for every two electrons transferred, four hydrogen ions are translocated across the cytoplasmic membrane), and thus conserves the redox energy in a proton gradient. In Campylobacter fetus subsp. fetus (strain 82-40), this protein is NADH-quinone oxidoreductase subunit I.